Consider the following 288-residue polypeptide: Acetyl-coenzyme A carboxylase carboxyl transferase subunit beta (288 aa).

Residues Leu34–Gln288 enclose the CoA carboxyltransferase N-terminal domain. Cys38, Cys41, Cys56, and Cys59 together coordinate Zn(2+). The segment at Cys38–Cys59 adopts a C4-type zinc-finger fold.

The protein belongs to the AccD/PCCB family. As to quaternary structure, acetyl-CoA carboxylase is a heterohexamer composed of biotin carboxyl carrier protein (AccB), biotin carboxylase (AccC) and two subunits each of ACCase subunit alpha (AccA) and ACCase subunit beta (AccD). The cofactor is Zn(2+).

The protein resides in the cytoplasm. It catalyses the reaction N(6)-carboxybiotinyl-L-lysyl-[protein] + acetyl-CoA = N(6)-biotinyl-L-lysyl-[protein] + malonyl-CoA. Its pathway is lipid metabolism; malonyl-CoA biosynthesis; malonyl-CoA from acetyl-CoA: step 1/1. Its function is as follows. Component of the acetyl coenzyme A carboxylase (ACC) complex. Biotin carboxylase (BC) catalyzes the carboxylation of biotin on its carrier protein (BCCP) and then the CO(2) group is transferred by the transcarboxylase to acetyl-CoA to form malonyl-CoA. In Streptococcus pyogenes serotype M1, this protein is Acetyl-coenzyme A carboxylase carboxyl transferase subunit beta.